The primary structure comprises 240 residues: UDP-2,3-diacylglucosamine hydrolase (240 aa).

Mn(2+) is bound by residues Asp8, His10, Asp41, Asn79, and His114. Residue 79 to 80 (NR) participates in substrate binding. Positions 122, 160, 164, 167, and 195 each coordinate substrate. Mn(2+) contacts are provided by His195 and His197.

It belongs to the LpxH family. Mn(2+) serves as cofactor.

It localises to the cell inner membrane. It catalyses the reaction UDP-2-N,3-O-bis[(3R)-3-hydroxytetradecanoyl]-alpha-D-glucosamine + H2O = 2-N,3-O-bis[(3R)-3-hydroxytetradecanoyl]-alpha-D-glucosaminyl 1-phosphate + UMP + 2 H(+). It functions in the pathway glycolipid biosynthesis; lipid IV(A) biosynthesis; lipid IV(A) from (3R)-3-hydroxytetradecanoyl-[acyl-carrier-protein] and UDP-N-acetyl-alpha-D-glucosamine: step 4/6. In terms of biological role, hydrolyzes the pyrophosphate bond of UDP-2,3-diacylglucosamine to yield 2,3-diacylglucosamine 1-phosphate (lipid X) and UMP by catalyzing the attack of water at the alpha-P atom. Involved in the biosynthesis of lipid A, a phosphorylated glycolipid that anchors the lipopolysaccharide to the outer membrane of the cell. This is UDP-2,3-diacylglucosamine hydrolase from Pectobacterium atrosepticum (strain SCRI 1043 / ATCC BAA-672) (Erwinia carotovora subsp. atroseptica).